Consider the following 163-residue polypeptide: Phosphopantetheine adenylyltransferase (163 aa).

Threonine 11 provides a ligand contact to substrate. Residues 11-12 (TF) and histidine 19 contribute to the ATP site. Substrate-binding residues include lysine 43, leucine 75, and arginine 89. Residues 90 to 92 (GLR), glutamate 100, and 125 to 131 (YSFISST) each bind ATP.

The protein belongs to the bacterial CoaD family. Homohexamer. Mg(2+) serves as cofactor.

Its subcellular location is the cytoplasm. The enzyme catalyses (R)-4'-phosphopantetheine + ATP + H(+) = 3'-dephospho-CoA + diphosphate. It participates in cofactor biosynthesis; coenzyme A biosynthesis; CoA from (R)-pantothenate: step 4/5. Reversibly transfers an adenylyl group from ATP to 4'-phosphopantetheine, yielding dephospho-CoA (dPCoA) and pyrophosphate. This Acinetobacter baumannii (strain ACICU) protein is Phosphopantetheine adenylyltransferase.